A 332-amino-acid polypeptide reads, in one-letter code: Putative pumilio homolog 20 (332 aa).

The PUM-HD domain maps to 1–332; the sequence is MAHQLRFAAA…NIASILNSIR (332 aa). Pumilio repeat units follow at residues 89-124 and 125-159; these read SDPD…FAAA and ILRR…AMYE. A Pumilio 3; degenerate repeat occupies 160–191; sequence HILHYASHIARDKHGNLALNDIITDAYRNKLF. Pumilio repeat units lie at residues 192 to 228, 229 to 266, and 267 to 303; these read DVIA…NIVV, SLRG…ELME, and CEGD…DLFW.

Its subcellular location is the cytoplasm. Sequence-specific RNA-binding protein that regulates translation and mRNA stability by binding the 3'-UTR of target mRNAs. This chain is Putative pumilio homolog 20 (APUM20), found in Arabidopsis thaliana (Mouse-ear cress).